The sequence spans 231 residues: RNA pyrophosphohydrolase (231 aa).

Residues 6-149 (GFRPNVGIIL…KRDVYQLALT (144 aa)) enclose the Nudix hydrolase domain. The Nudix box signature appears at 38 to 59 (GGIKYGETPVQAMYRELHEETG). The disordered stretch occupies residues 157–190 (RPQPRTERPGGHHHGQRYPRMASSVNAPPGASMA).

The protein belongs to the Nudix hydrolase family. RppH subfamily. It depends on a divalent metal cation as a cofactor.

Functionally, accelerates the degradation of transcripts by removing pyrophosphate from the 5'-end of triphosphorylated RNA, leading to a more labile monophosphorylated state that can stimulate subsequent ribonuclease cleavage. The sequence is that of RNA pyrophosphohydrolase from Paraburkholderia phymatum (strain DSM 17167 / CIP 108236 / LMG 21445 / STM815) (Burkholderia phymatum).